The sequence spans 440 residues: Serine hydroxymethyltransferase (440 aa).

Glycine 123 to isoleucine 125 serves as a coordination point for (6S)-5,6,7,8-tetrahydrofolate. Lysine 238 bears the N6-(pyridoxal phosphate)lysine mark.

This sequence belongs to the SHMT family. As to quaternary structure, homodimer. The cofactor is pyridoxal 5'-phosphate.

It localises to the cytoplasm. It functions in the pathway amino-acid biosynthesis; glycine biosynthesis; glycine from L-serine: step 1/1. Its function is as follows. Catalyzes the reversible interconversion of serine and glycine with a modified folate serving as the one-carbon carrier. Also exhibits a pteridine-independent aldolase activity toward beta-hydroxyamino acids, producing glycine and aldehydes, via a retro-aldol mechanism. The chain is Serine hydroxymethyltransferase from Nitrosopumilus maritimus (strain SCM1).